The chain runs to 345 residues: G-protein coupled receptor str-33 (345 aa).

At 1–11 (MTVNLRDLSRT) the chain is on the extracellular side. A helical transmembrane segment spans residues 12–32 (IAEFAFLTALVCNSLLIYLTA). Over 33 to 37 (RRTKN) the chain is Cytoplasmic. The chain crosses the membrane as a helical span at residues 38–58 (ITGAYKYMIILFALLGLIFSC). Residues 59–92 (TEMLARPFVHNFNASFVYFSLSNDLSEFKSLVQM) lie on the Extracellular side of the membrane. N71 carries N-linked (GlcNAc...) asparagine glycosylation. Residues 93-113 (LLVLYSGLYSSLISFVAVQFI) traverse the membrane as a helical segment. At 114 to 133 (YRYMVLVNANLLESWFTGWK) the chain is on the cytoplasmic side. A helical membrane pass occupies residues 134–154 (LVFWVFYVIFFGFAWSASVYF). Residues 155–204 (CLFPDTYSYNYIRTEFKDVYNIGVDRVAIFILVAYEKHPSSEEYKLRPAS) lie on the Extracellular side of the membrane. The helical transmembrane segment at 205 to 225 (VIMIAGTISILVIQYSIMLFC) threads the bilayer. Topologically, residues 226–258 (GASMHRQMNEKLKNFSPDNQRLQKQFFKTLLLQ) are cytoplasmic. A helical membrane pass occupies residues 259–279 (ISVPTVLFHMPIFPVLLGPFF). Residues 280–288 (NFEISAESG) lie on the Extracellular side of the membrane. A helical transmembrane segment spans residues 289–309 (IIYSLFSLYPPIDGLIIMTVV). At 310 to 345 (TDYRIALTELFLGSHSGAQVEVIPVEVVSILNFSLL) the chain is on the cytoplasmic side.

It belongs to the nematode receptor-like protein str family. In terms of tissue distribution, detected in ALM and PLM mechanosensory neurons and head neurons.

It is found in the cell membrane. Functionally, regulates egg-laying and locomotion. Likely to act upstream of goa-1 to suppress 5-hydroxytryptamine (5-HT) biosynthesis in hermaphrodite-specific neurons (HSNs) through inhibition of tph-1 transcription. In Caenorhabditis elegans, this protein is G-protein coupled receptor str-33.